The following is a 248-amino-acid chain: Triosephosphate isomerase (248 aa).

Positions 10 and 12 each coordinate substrate. Catalysis depends on His95, which acts as the Electrophile. Glu165 acts as the Proton acceptor in catalysis.

This sequence belongs to the triosephosphate isomerase family. In terms of assembly, homodimer.

The catalysed reaction is D-glyceraldehyde 3-phosphate = dihydroxyacetone phosphate. The protein operates within carbohydrate biosynthesis; gluconeogenesis. It participates in carbohydrate degradation; glycolysis; D-glyceraldehyde 3-phosphate from glycerone phosphate: step 1/1. This Eremothecium gossypii (strain ATCC 10895 / CBS 109.51 / FGSC 9923 / NRRL Y-1056) (Yeast) protein is Triosephosphate isomerase (TPI1).